The chain runs to 92 residues: MIKSFKHKGLKLLFEKGVTSGVPAQDVDRINDRLQAIDTATEIGELNRQIYKLHPLKGDREGYWSITVRANWRITFQFINGDAYILNYEDYH.

The active site involves histidine 92.

As to quaternary structure, forms a complex with the antitoxin HigA which inhibits the mRNA interferase activity. The heterodimer dimerizes to form a HigB-(HigA)2-HigB tetramer that is able to bind to the DNA.

Its function is as follows. Toxic component of a type II toxin-antitoxin (TA) system. A ribosome-associated translation-dependent mRNA interferase. Inhibits translation by sequence-specific cleavage of mRNA. Prefers either in-frame or out-of-frame 5'-AAA-3' codons (lysine). Also cleaves the first three AAAs of stretches of four or more A sequences. 20% of codons containing AA are cleaved and occassionally cuts even at a single A. This chain is Endoribonuclease HigB, found in Proteus vulgaris.